The chain runs to 172 residues: Ly6/PLAUR domain-containing protein 6B (172 aa).

An N-terminal signal peptide occupies residues 1–25 (MLLLCHILAVTILQILIISENWVFA). Residues 46 to 137 (FKCFTCENAG…VELPTNHTNA (92 aa)) enclose the UPAR/Ly6 domain. Residues 46-140 (FKCFTCENAG…PTNHTNAVFA (95 aa)) are sufficient for inhibiting alpha-7 nAChR currents. Intrachain disulfides connect C48-C76, C51-C60, C69-C95, C101-C120, C106-C117, and C121-C126. A lipid anchor (GPI-anchor amidated serine) is attached at S148. Positions 149-172 (GSSVSSVPSPYLLVLAWLFMLPLL) are cleaved as a propeptide — removed in mature form.

Its subcellular location is the cell membrane. Its function is as follows. Likely acts as a modulator of nicotinic acetylcholine receptors (nAChRs) activity. In vitro acts on nAChRs in a subtype- and stoichiometry-dependent manner. Modulates specifically alpha-3(3):beta-4(2) nAChRs by enhancing the sensitivity to ACh, decreasing ACh-induced maximal current response and increasing the rate of desensitization to ACh; has no effect on alpha-7 homomeric nAChRs; modulates alpha-3(2):alpha-5:beta-4(2) nAChRs in the context of CHRNA5/alpha-5 variant Asn-398 but not its wild-type sequence. However, according to another report in vitro it can weakly inhibits alpha-7 nAChRs. The chain is Ly6/PLAUR domain-containing protein 6B (Lypd6b) from Mus musculus (Mouse).